Reading from the N-terminus, the 238-residue chain is Ribosomal RNA small subunit methyltransferase I (238 aa).

Belongs to the methyltransferase superfamily. RsmI family.

It is found in the cytoplasm. It carries out the reaction cytidine(1402) in 16S rRNA + S-adenosyl-L-methionine = 2'-O-methylcytidine(1402) in 16S rRNA + S-adenosyl-L-homocysteine + H(+). Functionally, catalyzes the 2'-O-methylation of the ribose of cytidine 1402 (C1402) in 16S rRNA. In Mesomycoplasma conjunctivae (strain ATCC 25834 / NCTC 10147 / HRC/581) (Mycoplasma conjunctivae), this protein is Ribosomal RNA small subunit methyltransferase I.